Here is a 213-residue protein sequence, read N- to C-terminus: Macrodontain-1 (213 aa).

3 disulfides stabilise this stretch: cysteine 23–cysteine 63, cysteine 57–cysteine 96, and cysteine 153–cysteine 201. Cysteine 26 is an active-site residue. Catalysis depends on residues histidine 159 and asparagine 176.

As to quaternary structure, monomer. As to expression, fruits.

Its activity is regulated as follows. Inhibited by the general cysteine protease inhibitor E64 (L-trans-epoxysuccinyl-leucylamide-(4-guanido)-butane). Its function is as follows. Cysteine protease that catalyzes the preferential cleavage: Ala-|-Xaa &gt; Gln-|-Xaa &gt; Tyr-Xaa &gt;&gt; Leu-|-Xaa &gt; Gly-|-Xaa. Hydrolyzes the synthetic peptide substrate Bz-Phe-Val-Arg-pNA. The polypeptide is Macrodontain-1 (Ananas macrodontes (False pineapple)).